Consider the following 193-residue polypeptide: uncharacterized protein (193 aa).

This is an uncharacterized protein from Acidianus convivator (ATV).